The primary structure comprises 179 residues: Cytochrome b6-f complex iron-sulfur subunit (179 aa).

The helical transmembrane segment at 21–43 (LLTFGSVTGVALGALYPVVNYFI) threads the bilayer. In terms of domain architecture, Rieske spans 61-162 (GNDVVLSKFL…VSVTDDKVFL (102 aa)). The [2Fe-2S] cluster site is built by C108, H110, C126, and H129. Residues C113 and C128 are joined by a disulfide bond.

It belongs to the Rieske iron-sulfur protein family. The 4 large subunits of the cytochrome b6-f complex are cytochrome b6, subunit IV (17 kDa polypeptide, PetD), cytochrome f and the Rieske protein, while the 4 small subunits are PetG, PetL, PetM and PetN. The complex functions as a dimer. The cofactor is [2Fe-2S] cluster.

It localises to the cellular thylakoid membrane. It catalyses the reaction 2 oxidized [plastocyanin] + a plastoquinol + 2 H(+)(in) = 2 reduced [plastocyanin] + a plastoquinone + 4 H(+)(out). Its function is as follows. Component of the cytochrome b6-f complex, which mediates electron transfer between photosystem II (PSII) and photosystem I (PSI), cyclic electron flow around PSI, and state transitions. This Synechococcus elongatus (strain ATCC 33912 / PCC 7942 / FACHB-805) (Anacystis nidulans R2) protein is Cytochrome b6-f complex iron-sulfur subunit.